A 117-amino-acid chain; its full sequence is Immunoglobulin lambda variable 2 (117 aa).

The N-terminal stretch at 1–19 (MAWTSLILSLLALCSGASS) is a signal peptide. A Pyrrolidone carboxylic acid modification is found at Q20. The 98-residue stretch at 20–117 (QAVVTQESAL…FCALWYSTHF (98 aa)) folds into the Ig-like domain.

The sequence is that of Immunoglobulin lambda variable 2 from Mus musculus (Mouse).